We begin with the raw amino-acid sequence, 54 residues long: Large ribosomal subunit protein bL33 (54 aa).

This sequence belongs to the bacterial ribosomal protein bL33 family.

The polypeptide is Large ribosomal subunit protein bL33 (Parafrankia sp. (strain EAN1pec)).